Consider the following 417-residue polypeptide: Phosphoglycerate kinase, cytosolic (417 aa).

Positions 23, 24, 25, 26, 39, 61, 62, 64, 65, 132, 168, and 169 each coordinate (2R)-3-phosphoglycerate. ADP is bound by residues Gly214 and Ala215. Position 214 (Gly214) interacts with CDP. Residues Ala215 and Lys216 each coordinate AMP. Ala215 is an ATP binding site. Residue Ala215 coordinates Mg(2+). (2R)-3-phosphoglycerate is bound at residue Lys216. Asp219 contributes to the CDP binding site. Residue Asp219 participates in Mg(2+) binding. ADP-binding residues include Lys220 and Gly238. Lys220 provides a ligand contact to AMP. Lys220 contributes to the ATP binding site. Gly238 contributes to the CDP binding site. Positions 239 and 311 each coordinate AMP. Residues Ala239 and Ala311 each contribute to the ATP site. ADP is bound by residues Ala311 and Asn335. Gly336 and Phe341 together coordinate CDP. ADP contacts are provided by Phe341, Glu342, Asp374, and Thr375. Glu342 is a binding site for AMP. Residues Glu342, Asp374, and Thr375 each contribute to the ATP site. Asp374 provides a ligand contact to Mg(2+).

This sequence belongs to the phosphoglycerate kinase family. Monomer. It depends on Mg(2+) as a cofactor.

It localises to the cytoplasm. It carries out the reaction (2R)-3-phosphoglycerate + ATP = (2R)-3-phospho-glyceroyl phosphate + ADP. It participates in carbohydrate degradation; glycolysis; pyruvate from D-glyceraldehyde 3-phosphate: step 2/5. This is Phosphoglycerate kinase, cytosolic (PGKB) from Leishmania mexicana.